The sequence spans 232 residues: Phosphate import ATP-binding protein PstB (232 aa).

Residues 1–227 (MFNINMEIKE…PKDRRTENYI (227 aa)) form the ABC transporter domain. 18–25 (GPSGCGKT) is a binding site for ATP.

This sequence belongs to the ABC transporter superfamily. Phosphate importer (TC 3.A.1.7) family. As to quaternary structure, the complex is composed of two ATP-binding proteins (PstB), two transmembrane proteins (PstC and PstA) and a solute-binding protein (PstS).

It localises to the cell membrane. The catalysed reaction is phosphate(out) + ATP + H2O = ADP + 2 phosphate(in) + H(+). Its function is as follows. Part of the ABC transporter complex PstSACB involved in phosphate import. Responsible for energy coupling to the transport system. The polypeptide is Phosphate import ATP-binding protein PstB (Mycoplasma mycoides subsp. mycoides SC (strain CCUG 32753 / NCTC 10114 / PG1)).